Reading from the N-terminus, the 138-residue chain is Basic phospholipase A2 Drk-b1 (138 aa).

The first 16 residues, 1–16 (MRTLWIVAMCLIGVEG), serve as a signal peptide directing secretion. Cystine bridges form between Cys42–Cys131, Cys44–Cys60, Cys59–Cys111, Cys65–Cys138, Cys66–Cys104, Cys73–Cys97, and Cys91–Cys102. Ca(2+)-binding residues include Tyr43, Gly45, and Gly47. His63 is a catalytic residue. Asp64 provides a ligand contact to Ca(2+). The active site involves Asp105.

It depends on Ca(2+) as a cofactor. Expressed by the venom gland.

Its subcellular location is the secreted. The enzyme catalyses a 1,2-diacyl-sn-glycero-3-phosphocholine + H2O = a 1-acyl-sn-glycero-3-phosphocholine + a fatty acid + H(+). Exhibits high hydrolytic activities and shows strong preference for the anionic micelles (dPPC with deoxycholate) to the zwitterionic micelles (dPPC with Triton X-100). PLA2 catalyzes the calcium-dependent hydrolysis of the 2-acyl groups in 3-sn-phosphoglycerides. This is Basic phospholipase A2 Drk-b1 from Daboia russelii (Russel's viper).